A 452-amino-acid chain; its full sequence is MTTRTSLTIVLAAGEGTRMRSSLPKVLHPVAGRPLLAHVLAAAPHGADDKLAVVIGPDHQAVADETKRIRPDAETFVQSERLGTAHAVLAAKQAIARGADELLIAFGDTPLISAETFARLREPLRNGSALVVLGFRAADPTGYGRLVVEGDQLAAIREQADASADELKITLCNAGVMAIDGRIALDVLAQIGNANKKGEYYLTDAVGIMRERGLRASVIETDEDEVRGINTKAQLAEAEAVMQTRLRQAAMTAGVTLISPETIHLAADTRFGKDVTIEQFVVIGPGVSIADGAVIHSFSHIVGASVGSNASVGPYARLRPGTSLGDGAKIGNFVETKAARIDAGAKVNHLTYIGDAHIGEGANIGAGTITCNYDGFNKHRTEIGAGAFIGSNSSLVAPVKIGVGAYVGSGSVVTKNVPDDSLAVERNDQTVRVGWAKRFRETSARARKPKTS.

Residues methionine 1–lysine 232 are pyrophosphorylase. UDP-N-acetyl-alpha-D-glucosamine-binding positions include leucine 11–glycine 14, lysine 25, glutamine 78, and glycine 83–threonine 84. Aspartate 108 contacts Mg(2+). The UDP-N-acetyl-alpha-D-glucosamine site is built by glycine 144, glutamate 158, asparagine 173, and asparagine 230. Asparagine 230 is a binding site for Mg(2+). The linker stretch occupies residues alanine 233–alanine 253. The interval glycine 254–serine 452 is N-acetyltransferase. Residues arginine 319 and lysine 337 each coordinate UDP-N-acetyl-alpha-D-glucosamine. Histidine 349 (proton acceptor) is an active-site residue. UDP-N-acetyl-alpha-D-glucosamine is bound by residues tyrosine 352 and asparagine 363. Residues alanine 366, asparagine 372–tyrosine 373, serine 391, serine 409, and arginine 426 contribute to the acetyl-CoA site.

This sequence in the N-terminal section; belongs to the N-acetylglucosamine-1-phosphate uridyltransferase family. The protein in the C-terminal section; belongs to the transferase hexapeptide repeat family. As to quaternary structure, homotrimer. Requires Mg(2+) as cofactor.

The protein localises to the cytoplasm. The enzyme catalyses alpha-D-glucosamine 1-phosphate + acetyl-CoA = N-acetyl-alpha-D-glucosamine 1-phosphate + CoA + H(+). It catalyses the reaction N-acetyl-alpha-D-glucosamine 1-phosphate + UTP + H(+) = UDP-N-acetyl-alpha-D-glucosamine + diphosphate. It participates in nucleotide-sugar biosynthesis; UDP-N-acetyl-alpha-D-glucosamine biosynthesis; N-acetyl-alpha-D-glucosamine 1-phosphate from alpha-D-glucosamine 6-phosphate (route II): step 2/2. Its pathway is nucleotide-sugar biosynthesis; UDP-N-acetyl-alpha-D-glucosamine biosynthesis; UDP-N-acetyl-alpha-D-glucosamine from N-acetyl-alpha-D-glucosamine 1-phosphate: step 1/1. The protein operates within bacterial outer membrane biogenesis; LPS lipid A biosynthesis. In terms of biological role, catalyzes the last two sequential reactions in the de novo biosynthetic pathway for UDP-N-acetylglucosamine (UDP-GlcNAc). The C-terminal domain catalyzes the transfer of acetyl group from acetyl coenzyme A to glucosamine-1-phosphate (GlcN-1-P) to produce N-acetylglucosamine-1-phosphate (GlcNAc-1-P), which is converted into UDP-GlcNAc by the transfer of uridine 5-monophosphate (from uridine 5-triphosphate), a reaction catalyzed by the N-terminal domain. This Rhodopseudomonas palustris (strain BisB5) protein is Bifunctional protein GlmU.